The sequence spans 178 residues: Large ribosomal subunit protein uL5 (178 aa).

This sequence belongs to the universal ribosomal protein uL5 family. In terms of assembly, part of the 50S ribosomal subunit; part of the 5S rRNA/L5/L18/L25 subcomplex. Contacts the 5S rRNA and the P site tRNA. Forms a bridge to the 30S subunit in the 70S ribosome.

Functionally, this is one of the proteins that bind and probably mediate the attachment of the 5S RNA into the large ribosomal subunit, where it forms part of the central protuberance. In the 70S ribosome it contacts protein S13 of the 30S subunit (bridge B1b), connecting the 2 subunits; this bridge is implicated in subunit movement. Contacts the P site tRNA; the 5S rRNA and some of its associated proteins might help stabilize positioning of ribosome-bound tRNAs. The sequence is that of Large ribosomal subunit protein uL5 from Aliivibrio fischeri (strain ATCC 700601 / ES114) (Vibrio fischeri).